We begin with the raw amino-acid sequence, 626 residues long: Threonine--tRNA ligase (626 aa).

An editing domain region spans residues 1-145; sequence MRMLLIHSDY…SRTIVPEKAV (145 aa). Positions 207–506 are catalytic; it reads PHVRLMLEQE…QEKGIKPMYP (300 aa). Residues C299, H351, and H475 each coordinate Zn(2+).

Belongs to the class-II aminoacyl-tRNA synthetase family. In terms of assembly, homodimer. Requires Zn(2+) as cofactor.

It localises to the cytoplasm. It carries out the reaction tRNA(Thr) + L-threonine + ATP = L-threonyl-tRNA(Thr) + AMP + diphosphate + H(+). In terms of biological role, catalyzes the attachment of threonine to tRNA(Thr) in a two-step reaction: L-threonine is first activated by ATP to form Thr-AMP and then transferred to the acceptor end of tRNA(Thr). Also edits incorrectly charged L-seryl-tRNA(Thr). This is Threonine--tRNA ligase from Thermococcus kodakarensis (strain ATCC BAA-918 / JCM 12380 / KOD1) (Pyrococcus kodakaraensis (strain KOD1)).